The sequence spans 502 residues: Lysine--tRNA ligase (502 aa).

Residues E399 and E406 each coordinate Mg(2+).

This sequence belongs to the class-II aminoacyl-tRNA synthetase family. In terms of assembly, homodimer. Requires Mg(2+) as cofactor.

It is found in the cytoplasm. It carries out the reaction tRNA(Lys) + L-lysine + ATP = L-lysyl-tRNA(Lys) + AMP + diphosphate. This Synechococcus sp. (strain RCC307) protein is Lysine--tRNA ligase.